Here is a 140-residue protein sequence, read N- to C-terminus: Aspartate 1-decarboxylase (140 aa).

The active-site Schiff-base intermediate with substrate; via pyruvic acid is the Ser25. Ser25 is subject to Pyruvic acid (Ser). Substrate is bound at residue Thr57. Tyr58 (proton donor) is an active-site residue. 73–75 provides a ligand contact to substrate; the sequence is GAA.

This sequence belongs to the PanD family. As to quaternary structure, heterooctamer of four alpha and four beta subunits. It depends on pyruvate as a cofactor. In terms of processing, is synthesized initially as an inactive proenzyme, which is activated by self-cleavage at a specific serine bond to produce a beta-subunit with a hydroxyl group at its C-terminus and an alpha-subunit with a pyruvoyl group at its N-terminus.

The protein resides in the cytoplasm. It catalyses the reaction L-aspartate + H(+) = beta-alanine + CO2. It functions in the pathway cofactor biosynthesis; (R)-pantothenate biosynthesis; beta-alanine from L-aspartate: step 1/1. Catalyzes the pyruvoyl-dependent decarboxylation of aspartate to produce beta-alanine. The chain is Aspartate 1-decarboxylase from Persephonella marina (strain DSM 14350 / EX-H1).